Reading from the N-terminus, the 615-residue chain is DNA mismatch repair protein MutL (615 aa).

This sequence belongs to the DNA mismatch repair MutL/HexB family.

Functionally, this protein is involved in the repair of mismatches in DNA. It is required for dam-dependent methyl-directed DNA mismatch repair. May act as a 'molecular matchmaker', a protein that promotes the formation of a stable complex between two or more DNA-binding proteins in an ATP-dependent manner without itself being part of a final effector complex. The sequence is that of DNA mismatch repair protein MutL from Parabacteroides distasonis (strain ATCC 8503 / DSM 20701 / CIP 104284 / JCM 5825 / NCTC 11152).